A 236-amino-acid polypeptide reads, in one-letter code: Ureidoacrylate amidohydrolase RutB (236 aa).

The active-site Proton acceptor is the aspartate 24. Lysine 133 is a catalytic residue. Cysteine 166 serves as the catalytic Nucleophile.

It belongs to the isochorismatase family. RutB subfamily.

It carries out the reaction (Z)-3-ureidoacrylate + H2O + H(+) = (Z)-3-aminoacrylate + NH4(+) + CO2. It catalyses the reaction (Z)-3-ureidoacrylate + H2O = (Z)-3-aminoacrylate + carbamate + H(+). The catalysed reaction is (Z)-2-methylureidoacrylate + H2O + H(+) = (Z)-2-methylaminoacrylate + NH4(+) + CO2. Its function is as follows. Hydrolyzes ureidoacrylate to form aminoacrylate and carbamate. The carbamate hydrolyzes spontaneously, thereby releasing one of the nitrogen atoms of the pyrimidine ring as ammonia and one of its carbon atoms as CO2. This Klebsiella pneumoniae (strain 342) protein is Ureidoacrylate amidohydrolase RutB.